The primary structure comprises 871 residues: Translation initiation factor IF-2 (871 aa).

The segment at Met-1 to Gln-242 is disordered. A compositionally biased stretch (low complexity) spans Pro-68–Ala-91. Over residues Ala-115–Arg-174 the composition is skewed to basic and acidic residues. Low complexity-rich tracts occupy residues Lys-182–Ala-206 and Ala-225–Lys-241. The tr-type G domain maps to Pro-367–Lys-538. The segment at Gly-376–Thr-383 is G1. Residue Gly-376 to Thr-383 coordinates GTP. The G2 stretch occupies residues Gly-401 to His-405. A G3 region spans residues Asp-424–Gly-427. GTP-binding positions include Asp-424–His-428 and Asn-478–Asp-481. Residues Asn-478–Asp-481 form a G4 region. Residues Ser-514 to Lys-516 form a G5 region.

Belongs to the TRAFAC class translation factor GTPase superfamily. Classic translation factor GTPase family. IF-2 subfamily.

The protein resides in the cytoplasm. Functionally, one of the essential components for the initiation of protein synthesis. Protects formylmethionyl-tRNA from spontaneous hydrolysis and promotes its binding to the 30S ribosomal subunits. Also involved in the hydrolysis of GTP during the formation of the 70S ribosomal complex. The chain is Translation initiation factor IF-2 from Nitrobacter winogradskyi (strain ATCC 25391 / DSM 10237 / CIP 104748 / NCIMB 11846 / Nb-255).